The following is a 142-amino-acid chain: Large ribosomal subunit protein uL11 (142 aa).

Belongs to the universal ribosomal protein uL11 family. As to quaternary structure, part of the ribosomal stalk of the 50S ribosomal subunit. Interacts with L10 and the large rRNA to form the base of the stalk. L10 forms an elongated spine to which L12 dimers bind in a sequential fashion forming a multimeric L10(L12)X complex. Post-translationally, one or more lysine residues are methylated.

In terms of biological role, forms part of the ribosomal stalk which helps the ribosome interact with GTP-bound translation factors. The sequence is that of Large ribosomal subunit protein uL11 from Proteus vulgaris.